The sequence spans 230 residues: MATINLSLLPKTLTPNSKTLAPLLSILSTSSLSFLPCTRPHPIKSRSAAYPTVRALTDGEYSSRRNNNNNNSGEERETIMLPGCDYNHWLIVMEFPKDPAPTREQMIDTYLNTLATVLGSMEEAKKNMYAFSTTTYTGFQCTVTEETSEKFKGLPGVLWVLPDSYIDVKNKDYGGDKYVNGEIIPCQYPTYQPKQSRSSKYKSKAYVRQRDGPPAEQRRPKQEATPESST.

Residues methionine 1–alanine 55 constitute a chloroplast transit peptide. The tract at residues proline 189–threonine 230 is disordered. The segment covering arginine 197 to valine 207 has biased composition (basic residues). Over residues arginine 208 to alanine 224 the composition is skewed to basic and acidic residues.

Expressed in leaves, flowers including petals, and to a low level in roots.

It is found in the plastid. The protein localises to the chloroplast. Its function is as follows. Acts very early in chloroplast development, being required for expression of RNA polymerase beta subunit gene, and hence indirectly for subsequent expression of CAB and RBCS genes. The chain is DAG protein, chloroplastic (DAG) from Antirrhinum majus (Garden snapdragon).